Here is a 197-residue protein sequence, read N- to C-terminus: MMTLYPVVVQERTTGEVLMLAYANEEALELTKKTGYAHFFSRERQKIWKKGETSGNTMRVVEIRRDCDDDAYLYIVDFPEDKVACHTGNRSCFFKVEHRFEETGSPTFWLELYRLVRKRKEEMPEGSYTVKLFKEGKGKIAKKFGEEAVEVITGYLQNDRENLVWEIADMMYHLTVLMADAGVTVQDVMRELEKRRK.

The tract at residues 1-108 (MMTLYPVVVQ…RFEETGSPTF (108 aa)) is phosphoribosyl-AMP cyclohydrolase. Residues 109 to 197 (WLELYRLVRK…VMRELEKRRK (89 aa)) form a phosphoribosyl-ATP pyrophosphohydrolase region.

The protein in the N-terminal section; belongs to the PRA-CH family. It in the C-terminal section; belongs to the PRA-PH family.

The protein resides in the cytoplasm. The enzyme catalyses 1-(5-phospho-beta-D-ribosyl)-ATP + H2O = 1-(5-phospho-beta-D-ribosyl)-5'-AMP + diphosphate + H(+). It carries out the reaction 1-(5-phospho-beta-D-ribosyl)-5'-AMP + H2O = 1-(5-phospho-beta-D-ribosyl)-5-[(5-phospho-beta-D-ribosylamino)methylideneamino]imidazole-4-carboxamide. The protein operates within amino-acid biosynthesis; L-histidine biosynthesis; L-histidine from 5-phospho-alpha-D-ribose 1-diphosphate: step 2/9. It participates in amino-acid biosynthesis; L-histidine biosynthesis; L-histidine from 5-phospho-alpha-D-ribose 1-diphosphate: step 3/9. The protein is Histidine biosynthesis bifunctional protein HisIE (hisI) of Thermotoga maritima (strain ATCC 43589 / DSM 3109 / JCM 10099 / NBRC 100826 / MSB8).